A 251-amino-acid polypeptide reads, in one-letter code: Imidazole glycerol phosphate synthase subunit HisF (251 aa).

Residues aspartate 13 and aspartate 132 contribute to the active site.

This sequence belongs to the HisA/HisF family. Heterodimer of HisH and HisF.

Its subcellular location is the cytoplasm. It catalyses the reaction 5-[(5-phospho-1-deoxy-D-ribulos-1-ylimino)methylamino]-1-(5-phospho-beta-D-ribosyl)imidazole-4-carboxamide + L-glutamine = D-erythro-1-(imidazol-4-yl)glycerol 3-phosphate + 5-amino-1-(5-phospho-beta-D-ribosyl)imidazole-4-carboxamide + L-glutamate + H(+). It functions in the pathway amino-acid biosynthesis; L-histidine biosynthesis; L-histidine from 5-phospho-alpha-D-ribose 1-diphosphate: step 5/9. Functionally, IGPS catalyzes the conversion of PRFAR and glutamine to IGP, AICAR and glutamate. The HisF subunit catalyzes the cyclization activity that produces IGP and AICAR from PRFAR using the ammonia provided by the HisH subunit. The chain is Imidazole glycerol phosphate synthase subunit HisF from Campylobacter concisus (strain 13826).